The primary structure comprises 492 residues: Probable endopolygalacturonase D (492 aa).

The first 16 residues, 1-16 (MKRSALILSFLPLVFG), serve as a signal peptide directing secretion. Cysteines 151 and 166 form a disulfide. PbH1 repeat units lie at residues 216 to 238 (GTSV…AYWD), 258 to 280 (MYNS…EIES), 281 to 319 (TEHL…DIKE), and 320 to 341 (SSYF…AVTS). A glycan (N-linked (GlcNAc...) asparagine) is linked at Asn292. Asp334 functions as the Proton donor in the catalytic mechanism. A disulfide bridge links Cys336 with Cys352. His356 is a catalytic residue. 3 PbH1 repeats span residues 371 to 392 (VNGV…RIKT), 400 to 422 (VYNI…DVQQ), and 434 to 478 (TNGV…SITG). 2 N-linked (GlcNAc...) asparagine glycosylation sites follow: Asn407 and Asn441. 2 cysteine pairs are disulfide-bonded: Cys461/Cys466 and Cys484/Cys491.

This sequence belongs to the glycosyl hydrolase 28 family.

The protein localises to the secreted. It catalyses the reaction (1,4-alpha-D-galacturonosyl)n+m + H2O = (1,4-alpha-D-galacturonosyl)n + (1,4-alpha-D-galacturonosyl)m.. In terms of biological role, involved in maceration and soft-rotting of plant tissue. Hydrolyzes the 1,4-alpha glycosidic bonds of de-esterified pectate in the smooth region of the plant cell wall. This chain is Probable endopolygalacturonase D (pgaD), found in Aspergillus flavus (strain ATCC 200026 / FGSC A1120 / IAM 13836 / NRRL 3357 / JCM 12722 / SRRC 167).